A 469-amino-acid chain; its full sequence is Nuclear hormone receptor family member nhr-154 (469 aa).

The nuclear receptor DNA-binding region spans 80 to 159; it reads PSKCLVCRNP…VGMNPMAIQA (80 aa). 2 consecutive NR C4-type zinc fingers follow at residues 83–103 and 119–142; these read CLVCRNPAIGYHYDVPSCNGC and CAKQKKCMDGTEPVDMSKRLCRAC. Positions 230–459 constitute an NR LBD domain; the sequence is LDSKPVLVVT…KMGTTFRKCI (230 aa).

Belongs to the nuclear hormone receptor family.

The protein localises to the nucleus. In terms of biological role, orphan nuclear receptor. The sequence is that of Nuclear hormone receptor family member nhr-154 (nhr-154) from Caenorhabditis elegans.